Reading from the N-terminus, the 112-residue chain is Truncated ankyrin repeat protein B25 (112 aa).

It belongs to the orthopoxviruses B25 protein family.

The chain is Truncated ankyrin repeat protein B25 from Bos taurus (Bovine).